The chain runs to 176 residues: ATP-dependent protease subunit HslV (176 aa).

T2 is an active-site residue. Na(+)-binding residues include G157, C160, and T163.

It belongs to the peptidase T1B family. HslV subfamily. As to quaternary structure, a double ring-shaped homohexamer of HslV is capped on each side by a ring-shaped HslU homohexamer. The assembly of the HslU/HslV complex is dependent on binding of ATP.

The protein resides in the cytoplasm. It catalyses the reaction ATP-dependent cleavage of peptide bonds with broad specificity.. Its activity is regulated as follows. Allosterically activated by HslU binding. Functionally, protease subunit of a proteasome-like degradation complex believed to be a general protein degrading machinery. This Escherichia coli O45:K1 (strain S88 / ExPEC) protein is ATP-dependent protease subunit HslV.